The chain runs to 757 residues: Protein hunchback (757 aa).

2 disordered regions span residues 30–51 (EPGH…PIPS) and 171–213 (EKLQ…EDMK). The span at 39 to 51 (SVASSPRQSPIPS) shows a compositional bias: polar residues. Over residues 197-213 (EPEKEHDQMSNSSEDMK) the composition is skewed to basic and acidic residues. 4 C2H2-type zinc fingers span residues 239-261 (YKCK…TRTH), 268-290 (LQCP…IRKH), 296-318 (FQCD…RKSH), and 324-348 (YRCA…KYGH). Disordered stretches follow at residues 367–416 (DVYG…VATS), 511–535 (EQLQ…YERK), and 602–694 (MTSP…APPS). 2 stretches are compositionally biased toward low complexity: residues 397 to 414 (VAAV…QPVA) and 512 to 521 (QLQQQNQQQS). The span at 522-531 (DNEEEDQDDE) shows a compositional bias: acidic residues. Residues 651-694 (ANTSASSTASSSGNSSNASSNSNGNSSSNSSSNGTTSAVAAPPS) show a composition bias toward low complexity. C2H2-type zinc fingers lie at residues 704–726 (YECK…MGYH) and 732–756 (FKCN…RNAH).

Belongs to the hunchback C2H2-type zinc-finger protein family.

The protein resides in the nucleus. In terms of biological role, gap class segmentation protein that controls development of head structures. The sequence is that of Protein hunchback (hb) from Drosophila sechellia (Fruit fly).